The chain runs to 426 residues: D-tagatose-1,6-bisphosphate aldolase subunit KbaZ (426 aa).

The protein belongs to the GatZ/KbaZ family. KbaZ subfamily. Forms a complex with KbaY.

It functions in the pathway carbohydrate metabolism; D-tagatose 6-phosphate degradation; D-glyceraldehyde 3-phosphate and glycerone phosphate from D-tagatose 6-phosphate: step 2/2. Component of the tagatose-1,6-bisphosphate aldolase KbaYZ that is required for full activity and stability of the Y subunit. Could have a chaperone-like function for the proper and stable folding of KbaY. When expressed alone, KbaZ does not show any aldolase activity. The polypeptide is D-tagatose-1,6-bisphosphate aldolase subunit KbaZ (Escherichia coli O139:H28 (strain E24377A / ETEC)).